Reading from the N-terminus, the 48-residue chain is Large ribosomal subunit protein bL34 (48 aa).

It belongs to the bacterial ribosomal protein bL34 family.

This is Large ribosomal subunit protein bL34 from Gloeothece citriformis (strain PCC 7424) (Cyanothece sp. (strain PCC 7424)).